The chain runs to 362 residues: F-box protein At1g54550 (362 aa).

Positions 1–47 (MATVTDLPDDLVREIFSRVPLTSLRAVRSTCKKWNAISKYDILGKKA) constitute an F-box domain.

In Arabidopsis thaliana (Mouse-ear cress), this protein is F-box protein At1g54550.